The chain runs to 549 residues: Probable glucuronosyltransferase Os01g0157700 (549 aa).

Residues 1-16 lie on the Cytoplasmic side of the membrane; that stretch reads MDSEERSKKRLRLWSR. A helical; Signal-anchor for type II membrane protein transmembrane segment spans residues 17 to 37; the sequence is AVVHFSLCFAIGVFAALLPLA. Residues 38 to 549 lie on the Lumenal side of the membrane; sequence ATGATSIDSI…TPEEGKTKEG (512 aa). 9 N-linked (GlcNAc...) asparagine glycosylation sites follow: Asn112, Asn139, Asn214, Asn229, Asn240, Asn251, Asn264, Asn269, and Asn300. The tract at residues 232–252 is disordered; the sequence is ETTWDSSSNTTQTTWDSSSNK. Positions 350–363 are enriched in basic and acidic residues; sequence IEQATPEKESLTKG. Disordered stretches follow at residues 350-371, 413-432, and 441-524; these read IEQA…SHDM, EQET…ESHD, and KIEE…KETH. N-linked (GlcNAc...) asparagine glycans are attached at residues Asn421 and Asn452. Composition is skewed to basic and acidic residues over residues 441-465, 472-496, and 503-524; these read KIEE…HDMM, KIDE…HDMM, and KIEE…KETH.

The protein belongs to the glycosyltransferase 43 family.

It localises to the golgi apparatus membrane. In terms of biological role, involved in the synthesis of glucuronoxylan hemicellulose in secondary cell walls. In Oryza sativa subsp. japonica (Rice), this protein is Probable glucuronosyltransferase Os01g0157700.